The chain runs to 318 residues: dTDP-6-deoxy-L-talose 4-dehydrogenase (NAD(P)(+)) (318 aa).

NAD(+) contacts are provided by residues 19–20 (FI), 60–61 (DP), Asn-95, Thr-120, Tyr-145, and Lys-149. Thr-120 and Tyr-145 together coordinate substrate. Tyr-145 (proton acceptor) is an active-site residue.

It belongs to the NAD(P)-dependent epimerase/dehydratase family.

It catalyses the reaction dTDP-6-deoxy-beta-L-talose + NAD(+) = dTDP-4-dehydro-beta-L-rhamnose + NADH + H(+). The enzyme catalyses dTDP-6-deoxy-beta-L-talose + NADP(+) = dTDP-4-dehydro-beta-L-rhamnose + NADPH + H(+). Catalyzes the reduction of dTDP-6-deoxy-L-lyxo-4-hexulose to dTDP-6-deoxy-L-talose. Can use NAD(+) or NADP(+). The protein is dTDP-6-deoxy-L-talose 4-dehydrogenase (NAD(P)(+)) (tal) of Kitasatospora kifunensis (Streptomyces kifunensis).